The sequence spans 325 residues: Elongation factor P--(R)-beta-lysine ligase (325 aa).

76–78 (SPE) provides a ligand contact to substrate. ATP is bound by residues 100–102 (RNE) and Asn109. Tyr118 contributes to the substrate binding site. 244 to 245 (EL) provides a ligand contact to ATP. Glu251 contacts substrate. Position 300 (Gly300) interacts with ATP.

This sequence belongs to the class-II aminoacyl-tRNA synthetase family. EpmA subfamily. Homodimer.

It catalyses the reaction D-beta-lysine + L-lysyl-[protein] + ATP = N(6)-((3R)-3,6-diaminohexanoyl)-L-lysyl-[protein] + AMP + diphosphate + H(+). Its function is as follows. With EpmB is involved in the beta-lysylation step of the post-translational modification of translation elongation factor P (EF-P). Catalyzes the ATP-dependent activation of (R)-beta-lysine produced by EpmB, forming a lysyl-adenylate, from which the beta-lysyl moiety is then transferred to the epsilon-amino group of a conserved specific lysine residue in EF-P. The sequence is that of Elongation factor P--(R)-beta-lysine ligase from Enterobacter sp. (strain 638).